We begin with the raw amino-acid sequence, 681 residues long: Chaperone protein HtpG (681 aa).

The tract at residues 1–326 (MQKGNIGVTT…SPDIPLNVSR (326 aa)) is a; substrate-binding. The interval 327–545 (SYLQSDSNVK…YMRRMKEMAN (219 aa)) is b. The segment at 546–681 (IQAGMSFYGE…NFVKRSIELI (136 aa)) is c. Residues 589-620 (IQTEMNSVSKRRNELKDSQKDKKEEDIPTAEK) form a disordered region. Over residues 599 to 620 (RRNELKDSQKDKKEEDIPTAEK) the composition is skewed to basic and acidic residues.

The protein belongs to the heat shock protein 90 family. In terms of assembly, homodimer.

It is found in the cytoplasm. Its function is as follows. Molecular chaperone. Has ATPase activity. The polypeptide is Chaperone protein HtpG (Bacteroides thetaiotaomicron (strain ATCC 29148 / DSM 2079 / JCM 5827 / CCUG 10774 / NCTC 10582 / VPI-5482 / E50)).